We begin with the raw amino-acid sequence, 1048 residues long: Copper-dependent transcription factor 1 (1048 aa).

Residues 1 to 40 constitute a DNA-binding region (copper-fist); sequence MVLINDKKFACEKCIKGHRVSACTHTDRPLFEVKKKGRPS. Residues C11, C14, C23, and H25 each contribute to the Zn(2+) site. Low complexity predominate over residues 85 to 99; sequence ANESGGASATANTSA. Disordered stretches follow at residues 85–117 and 178–273; these read ANES…PTFP and HSGH…RPPV. Residues 211-222 are compositionally biased toward polar residues; sequence TRNSPTSINSSE. Residues 348–362 carry the CRM-I motif; the sequence is CMCGDDCSCPGCATH. The CRM-II motif lies at 455-482; it reads CCGGKCGCPPGECACTKQCCGCCGECTC. Disordered regions lie at residues 506 to 702 and 835 to 876; these read SSCG…PLNS and GPSG…WKFP. Polar residues-rich tracts occupy residues 527 to 536, 550 to 565, 629 to 645, 664 to 682, and 692 to 702; these read QIPQSVSPTS, PVST…SFNT, GSMT…GVRR, SIQS…SNQI, and APSQMTAPLNS. Residues 835–845 are compositionally biased toward low complexity; sequence GPSGPSAIPAT. Over residues 846-868 the composition is skewed to polar residues; the sequence is NIPSRHTTPQASRPLTPPESSFT.

Its subcellular location is the nucleus. It localises to the cytoplasm. The protein localises to the cell cortex. In terms of biological role, transcription factor that regulates copper acquisition and homeostasis, and which plays a central role in fungal pathogenesis during neurologic infection. The transcriptional regulation exerted by CUF1 is intrinsically complex since it acts as a dual sensor of copper levels, responsible for expression of a set of copper-specific copper transporters, CTR1 and CTR4, at low copper concentrations, and 2 metallothioneins, CMT1 and CMT2, at high copper concentrations. Positively regulates the expression of the copper acquisition factor BIM1 under copper-limiting conditions. Also positively regulates the expression of super oxide dismutase SOD2 isoform 2 during oxidative stress and copper-limiting conditions. Negatively regulates the expression of super oxide dismutase SOD1 during copper-limiting conditions. Also regulates ATM1, an ABC transporter with functions in the iron-sulfur clusters (ISC) export machinery, during copper stress. Another target of CUF1 is the gene encoding the laccase LAC1. Binds promoters of target genes at Cu-responsive elements (CuREs) that contain a variable A/T rich 5' region followed by the core consensus sequence 5'-G(G/C)CTC(A/G)-3'. Negatively regulates capsule biosynthesis, probably via modulating iron acquisition through the high-affinity iron uptake pathway. The polypeptide is Copper-dependent transcription factor 1 (Cryptococcus neoformans var. grubii serotype A (strain H99 / ATCC 208821 / CBS 10515 / FGSC 9487) (Filobasidiella neoformans var. grubii)).